The chain runs to 154 residues: PTS system fructose-specific EIIA component (154 aa).

One can recognise a PTS EIIA type-2 domain in the interval 8–152; the sequence is TITPLELISL…QTVQDVLAEV (145 aa). Histidine 70 functions as the Tele-phosphohistidine intermediate in the catalytic mechanism. The residue at position 70 (histidine 70) is a Phosphohistidine; by HPr.

Its subcellular location is the cytoplasm. In terms of biological role, the phosphoenolpyruvate-dependent sugar phosphotransferase system (sugar PTS), a major carbohydrate active transport system, catalyzes the phosphorylation of incoming sugar substrates concomitantly with their translocation across the cell membrane. The enzyme II PtfABC PTS system is involved in fructose transport. The sequence is that of PTS system fructose-specific EIIA component from Haloferax volcanii (strain ATCC 29605 / DSM 3757 / JCM 8879 / NBRC 14742 / NCIMB 2012 / VKM B-1768 / DS2) (Halobacterium volcanii).